The primary structure comprises 134 residues: UPF0412 protein YaaI (134 aa).

The N-terminal stretch at 1–23 (MKSVFTISASLAISLMLCCTAQA) is a signal peptide.

This sequence belongs to the UPF0412 family.

The polypeptide is UPF0412 protein YaaI (Escherichia coli (strain ATCC 8739 / DSM 1576 / NBRC 3972 / NCIMB 8545 / WDCM 00012 / Crooks)).